A 496-amino-acid chain; its full sequence is Cytochrome P450 71D181 (496 aa).

The chain crosses the membrane as a helical; Signal-anchor for type II membrane protein span at residues 1–21; the sequence is MDISILWVAIILVISSYFIFM. Cys-435 lines the heme pocket. The tract at residues 471–496 is disordered; sequence MSETPGLSGPRKNPLIMVPTIHNPTS.

The protein belongs to the cytochrome P450 family. Heme is required as a cofactor.

Its subcellular location is the membrane. The catalysed reaction is gamma-terpinene + 2 reduced [NADPH--hemoprotein reductase] + 2 O2 = carvacrol + 2 oxidized [NADPH--hemoprotein reductase] + 3 H2O + 2 H(+). The enzyme catalyses (4S)-limonene + reduced [NADPH--hemoprotein reductase] + O2 = (1S,5R)-carveol + oxidized [NADPH--hemoprotein reductase] + H2O + H(+). It carries out the reaction (4R)-limonene + reduced [NADPH--hemoprotein reductase] + O2 = (1R,5S)-carveol + oxidized [NADPH--hemoprotein reductase] + H2O + H(+). It catalyses the reaction alpha-terpinene + 2 reduced [NADPH--hemoprotein reductase] + 2 O2 = carvacrol + 2 oxidized [NADPH--hemoprotein reductase] + 3 H2O + 2 H(+). Its pathway is secondary metabolite biosynthesis; terpenoid biosynthesis. Involved in the biosynthesis of phenolic monoterpenes natural products thymol and carvacrol which have a broad range of biological activities acting as antimicrobial compounds, insecticides, antioxidants and pharmaceutical agents. Catalyzes the C2-hydroxylation of gamma-terpinene and alpha-terpinene to produce carvacrol. Also mediates the C6-hydroxylation of (4S)-limonene and (4R)-limonene to form carveol. The chain is Cytochrome P450 71D181 from Thymus vulgaris (Thyme).